The following is a 264-amino-acid chain: Thymidylate synthase (264 aa).

A dUMP-binding site is contributed by R21. (6R)-5,10-methylene-5,6,7,8-tetrahydrofolate is bound at residue H51. 126–127 contributes to the dUMP binding site; it reads RR. Residue C146 is the Nucleophile of the active site. DUMP contacts are provided by residues 166–169, N177, and 207–209; these read RSAD and HLY. D169 serves as a coordination point for (6R)-5,10-methylene-5,6,7,8-tetrahydrofolate. A263 contributes to the (6R)-5,10-methylene-5,6,7,8-tetrahydrofolate binding site.

It belongs to the thymidylate synthase family. Bacterial-type ThyA subfamily. In terms of assembly, homodimer.

It is found in the cytoplasm. The catalysed reaction is dUMP + (6R)-5,10-methylene-5,6,7,8-tetrahydrofolate = 7,8-dihydrofolate + dTMP. Its pathway is pyrimidine metabolism; dTTP biosynthesis. In terms of biological role, catalyzes the reductive methylation of 2'-deoxyuridine-5'-monophosphate (dUMP) to 2'-deoxythymidine-5'-monophosphate (dTMP) while utilizing 5,10-methylenetetrahydrofolate (mTHF) as the methyl donor and reductant in the reaction, yielding dihydrofolate (DHF) as a by-product. This enzymatic reaction provides an intracellular de novo source of dTMP, an essential precursor for DNA biosynthesis. The protein is Thymidylate synthase of Azoarcus sp. (strain BH72).